The primary structure comprises 739 residues: Phosphoribosylformylglycinamidine synthase subunit PurL (739 aa).

Histidine 54 is an active-site residue. Residues tyrosine 57 and lysine 96 each coordinate ATP. Glutamate 98 is a binding site for Mg(2+). Residues 99-102 and arginine 121 each bind substrate; that span reads SHNH. Histidine 100 serves as the catalytic Proton acceptor. Aspartate 122 provides a ligand contact to Mg(2+). Glutamine 245 contributes to the substrate binding site. Position 273 (aspartate 273) interacts with Mg(2+). 317–319 contributes to the substrate binding site; that stretch reads ESQ. Aspartate 500 and glycine 537 together coordinate ATP. Asparagine 538 is a binding site for Mg(2+). Substrate is bound at residue serine 540.

This sequence belongs to the FGAMS family. In terms of assembly, monomer. Part of the FGAM synthase complex composed of 1 PurL, 1 PurQ and 2 PurS subunits.

The protein resides in the cytoplasm. The enzyme catalyses N(2)-formyl-N(1)-(5-phospho-beta-D-ribosyl)glycinamide + L-glutamine + ATP + H2O = 2-formamido-N(1)-(5-O-phospho-beta-D-ribosyl)acetamidine + L-glutamate + ADP + phosphate + H(+). It functions in the pathway purine metabolism; IMP biosynthesis via de novo pathway; 5-amino-1-(5-phospho-D-ribosyl)imidazole from N(2)-formyl-N(1)-(5-phospho-D-ribosyl)glycinamide: step 1/2. In terms of biological role, part of the phosphoribosylformylglycinamidine synthase complex involved in the purines biosynthetic pathway. Catalyzes the ATP-dependent conversion of formylglycinamide ribonucleotide (FGAR) and glutamine to yield formylglycinamidine ribonucleotide (FGAM) and glutamate. The FGAM synthase complex is composed of three subunits. PurQ produces an ammonia molecule by converting glutamine to glutamate. PurL transfers the ammonia molecule to FGAR to form FGAM in an ATP-dependent manner. PurS interacts with PurQ and PurL and is thought to assist in the transfer of the ammonia molecule from PurQ to PurL. The chain is Phosphoribosylformylglycinamidine synthase subunit PurL from Bacillus anthracis (strain A0248).